We begin with the raw amino-acid sequence, 391 residues long: 8-amino-7-oxononanoate synthase (391 aa).

Residue Arg-24 coordinates substrate. 112–113 (GY) contributes to the pyridoxal 5'-phosphate binding site. His-137 is a binding site for substrate. The pyridoxal 5'-phosphate site is built by Ser-183, His-211, and Thr-240. Position 243 is an N6-(pyridoxal phosphate)lysine (Lys-243). Thr-357 lines the substrate pocket.

Belongs to the class-II pyridoxal-phosphate-dependent aminotransferase family. BioF subfamily. As to quaternary structure, homodimer. Requires pyridoxal 5'-phosphate as cofactor.

The catalysed reaction is 6-carboxyhexanoyl-[ACP] + L-alanine + H(+) = (8S)-8-amino-7-oxononanoate + holo-[ACP] + CO2. The protein operates within cofactor biosynthesis; biotin biosynthesis. Its function is as follows. Catalyzes the decarboxylative condensation of pimeloyl-[acyl-carrier protein] and L-alanine to produce 8-amino-7-oxononanoate (AON), [acyl-carrier protein], and carbon dioxide. The polypeptide is 8-amino-7-oxononanoate synthase (Alkalilimnicola ehrlichii (strain ATCC BAA-1101 / DSM 17681 / MLHE-1)).